Consider the following 273-residue polypeptide: 4-hydroxy-tetrahydrodipicolinate reductase (273 aa).

Position 12 to 17 (12 to 17 (GSGGRM)) interacts with NAD(+). Arg39 contacts NADP(+). Residues 102–104 (GTT) and 126–129 (AANF) each bind NAD(+). His159 functions as the Proton donor/acceptor in the catalytic mechanism. (S)-2,3,4,5-tetrahydrodipicolinate is bound at residue His160. Lys163 functions as the Proton donor in the catalytic mechanism. 169-170 (GT) is a binding site for (S)-2,3,4,5-tetrahydrodipicolinate.

It belongs to the DapB family. In terms of assembly, homotetramer.

It is found in the cytoplasm. It catalyses the reaction (S)-2,3,4,5-tetrahydrodipicolinate + NAD(+) + H2O = (2S,4S)-4-hydroxy-2,3,4,5-tetrahydrodipicolinate + NADH + H(+). The catalysed reaction is (S)-2,3,4,5-tetrahydrodipicolinate + NADP(+) + H2O = (2S,4S)-4-hydroxy-2,3,4,5-tetrahydrodipicolinate + NADPH + H(+). The protein operates within amino-acid biosynthesis; L-lysine biosynthesis via DAP pathway; (S)-tetrahydrodipicolinate from L-aspartate: step 4/4. Its function is as follows. Catalyzes the conversion of 4-hydroxy-tetrahydrodipicolinate (HTPA) to tetrahydrodipicolinate. The protein is 4-hydroxy-tetrahydrodipicolinate reductase of Serratia proteamaculans (strain 568).